Here is a 2311-residue protein sequence, read N- to C-terminus: MKSRKVKSVRPGRGRILGLTDVTPSTSLPPLVEGQVRSFLQVTVSKILWTVPKPPPSVLVRLRWWGETANGTVFRPRDSSQTEQKGAKTTTRYAVRCGPKQFTSYLTDMGMLVFEVMTKLDHFPIGRAQISGIAQLSLAHPVSGFFTIVSPTSEKLGELQVSVQLEPLPETYDSSSSAPNTDISFDHASESYGKALTGHPTTMNDPPQPIILSLASADKRESESSSRVTTPRGRDHLYFQENADPGKDSYRGTQDHVTVGWSNVTEGVQSIKPIYSEGTTAGKDALTVNSGPATKDLLSALLDQGSKLRDAMVVSALKSSPDLDHNPDIKLPLALNNYSLSQARATSEIPSPTLMRNLLNSRHSPQTRDILLQPADSFIPDMEAPSDAKAIELLLGSSVLSPGHYWDGTGSPPESISGSDFYNESELNDPLYDQSLLEKLFYKAPKSDSSASDFMSDDENTRSQNKKNKIALDRGRHRDNSPSEYKEDAKQTKGNDSLRDSKTSEKSTSRCEGISLSMDQAALLGQIHVAHVVVESLRVPLDGTAVTPSKTNSRGRPPRPVRPAKQTFFVEFQFPVLSKSRSGEVNSATEITRLVSSKVVNGSIKFQQRFTFPVLFSGQMIKHWWNTDLTFRIFLRKGTQNKPGPVGSATLPLRDVLQSPGLSVTCSLPVSCTAEDSHTAAGPLKISVALAGDNKNIHDISEKTLEPENQAPVLPAVTSKAELENSASYTDLRPVAEKSSPLRQSLPPHIGNGGPKVSFSQNPQQTAEEDGLLLHIVLMVPEGKGLVAAGGDSSGICNSYLNCKLFSAQEATRSSVVWGSTQPQYNFSQVAPLTLNARLLERMKNNVMIIEIWNRVASPGQDQLLGLAKLPLHQFYMSFSDPKITRLLLQAQYPVVAVDSYVPIIDVFSGCDRGKLKVLLAIGSGDQVVALQRLKNEEGTSQTAMPRPAHFLDPPLSSSQMGRPQEGMTDHIFEIHVENVKGLTPLQSTVWGEADCFVQYYFPAHGPDSHTAIDLPEIAMTLKPVRTATTLCVPDPVFNDRQSHTIVAQSDTPVQRLLLGAYSMQGLSGGGGVPFEIWCRYYYPNVRDQMVAKGVLPLSRLCAMVTMQHREDVGIQAFSLPLIPRSEKSAELPPQPSGLLNVNVTYRRSMRNPVGMLATRMASISVQIHRASGLQAAARLVAQQDASFQYSADVGVNAYVTIHPAFLPDVELRNTRTVARTFCPEFDHHYEFPCNMVIQRNNGEACSLAEVLYFSEIVLSIHHQNVASVGSTRPQPVRDYHLGMVRIPCRQLITKRSGVSGWYPVTVPEDSKLPTDSTILHSVVGGLELSVHFAHHSDRDRVLEVARGLGWNEYNEDFQEAIATEADEWHKREDLVNLSVNIPKIWLPLHCLLLAGHKHIHKSTYCYLRYKFYDREAVCSPLRRPRLSEDGQQATIMFELSENRELIKHQPLVWYLREERMEIQVWRSYGKDTNGPRPQDTDRLIGCAYVDLKALSENTSRTLAVSGVYPLFKRNVSSLWGAAVRVHLALSSAYHPSNSSRRLSCAGERSQSEGEEWAPTSGDSFEEKQDDSAKNDKPEAKTEVPLLDAKEQPVGEVDLKNTFAASIVVERAMHLSLKGTPLTERAAATPTCCVSYPVAGCSEPVTTPVIANTDSPLWNFQHQARLHKELLLDPQQRLVFKVWHKTDVERVVGFASVDLSPLLSGFQSICGWYNIVDFVGQCQGQVKVSITPLEGVAHLKTKVTSQRSSSYQSRPAFCSSFSYNPSQSEVPAFIPHIPTLHHQLSDRENSGPLFPFLRHEEHMENVRRFHESLQQAERNAHTVEGLDSLSQSSRSSLLSALRKNLGELDEIQKYFNQKLYRSISNAETSRCASVQIPQVQPPNSEPAEEDSDAKMLLQKSSFLVSQVSNLITGLQGIPKFAPAFSSTEQRLDVQGQTSVQHQQVDNMEPMAPERSEAYEREGQRSDTPPFSPLGSLNVSGEKLMEFIGTDMDEKERHLFAEKHQEEQDKHIIHGSSDEEYEEDVIEPRTLNEITTMTDRTSPWSSILSERDSDSMDHPQDQPVNPLAAENNRVITDFFSSFHQNDPSSVLSSARSTDSEVLAEGSRVRKISSSSGSEAETVGVQLSVDPAEQGALGEAESEAESQEMDGDPEANRTEEEQQDPVTVFSALSSGSDESEHITYGASEPDCSPPQDEPETDYPCSEPLEGNMHHIDEEEQPAGSESPQVPPSNLLSDPVIVPNFFLPPQHLEASMRHLSLSAVREGRSDTPGIPFRRSKRQKPRLAPADLPKEETNRIARIFAAQFPGPPTPP.

Disordered stretches follow at residues 447-511 (SDSS…TSRC) and 543-562 (GTAV…RPVR). Residues 470–509 (IALDRGRHRDNSPSEYKEDAKQTKGNDSLRDSKTSEKSTS) show a composition bias toward basic and acidic residues. C2 domains lie at 508–666 (TSRC…SVTC), 751–888 (GNGG…TRLL), 952–1112 (LDPP…HRED), 1136–1303 (PSGL…SGWY), 1370–1505 (HKRE…TLAV), and 1581–1713 (KTEV…CGWY). Positions 939–964 (GTSQTAMPRPAHFLDPPLSSSQMGRP) are disordered. Disordered stretches follow at residues 1536 to 1589 (PSNS…LLDA), 1955 to 1977 (SEAY…GSLN), 2036 to 2065 (MTDR…PVNP), 2084 to 2233 (NDPS…SNLL), and 2261 to 2292 (VREG…PKEE). Composition is skewed to basic and acidic residues over residues 1565–1589 (FEEK…LLDA) and 1955–1964 (SEAYEREGQR). Residues 2036-2047 (MTDRTSPWSSIL) are compositionally biased toward polar residues. Residues 2048-2059 (SERDSDSMDHPQ) show a composition bias toward basic and acidic residues. Positions 2084–2095 (NDPSSVLSSARS) are enriched in polar residues. Over residues 2138-2151 (AESEAESQEMDGDP) the composition is skewed to acidic residues. Polar residues predominate over residues 2221–2233 (GSESPQVPPSNLL).

Its subcellular location is the cytoplasm. It is found in the cytoskeleton. It localises to the cilium basal body. The protein localises to the microtubule organizing center. The protein resides in the centrosome. Its subcellular location is the centriole. Its function is as follows. Component of the centrioles that acts as a positive regulator of centriole elongation. Promotes assembly of centriolar distal appendage, a structure at the distal end of the mother centriole that acts as an anchor of the cilium. Required for primary cilium formation. The sequence is that of C2 domain-containing protein 3 (c2cd3) from Xenopus tropicalis (Western clawed frog).